The following is a 73-amino-acid chain: Neurogranin (73 aa).

Residues 26 to 55 (ANAAAAKIQASFRGHMTRKKIKGGEIDRKT) form the IQ domain. A Phosphoserine; by PKC modification is found at Ser36. Residues 47-59 (KGGEIDRKTKDAE) show a composition bias toward basic and acidic residues. A disordered region spans residues 47-73 (KGGEIDRKTKDAECANSTRGGDLRNGD).

The protein belongs to the neurogranin family.

Functionally, acts as a 'third messenger' substrate of protein kinase C-mediated molecular cascades during synaptic development and remodeling. Binds to calmodulin in the absence of calcium. The polypeptide is Neurogranin (NRGN) (Serinus canaria (Island canary)).